The sequence spans 258 residues: Deoxyribose-phosphate aldolase (258 aa).

Aspartate 102 serves as the catalytic Proton donor/acceptor. The Schiff-base intermediate with acetaldehyde role is filled by lysine 165. Lysine 199 serves as the catalytic Proton donor/acceptor.

It belongs to the DeoC/FbaB aldolase family. DeoC type 2 subfamily.

The protein resides in the cytoplasm. It catalyses the reaction 2-deoxy-D-ribose 5-phosphate = D-glyceraldehyde 3-phosphate + acetaldehyde. The protein operates within carbohydrate degradation; 2-deoxy-D-ribose 1-phosphate degradation; D-glyceraldehyde 3-phosphate and acetaldehyde from 2-deoxy-alpha-D-ribose 1-phosphate: step 2/2. Catalyzes a reversible aldol reaction between acetaldehyde and D-glyceraldehyde 3-phosphate to generate 2-deoxy-D-ribose 5-phosphate. This is Deoxyribose-phosphate aldolase from Aliivibrio salmonicida (strain LFI1238) (Vibrio salmonicida (strain LFI1238)).